The chain runs to 353 residues: MNGEEIIRFERVTKEYDGTVVLDDVSFAMERGKFYTLLGPSGCGKTTILRLIAGFIEPTEGTIYFHGKPIQNVPPNKRQVNTVFQDYALFPHLDVFENVAFGLRVKKMKEADIRQKVSEALRFVNLEGYERRRIQEMSGGQRQRVAIARAIVNEPEVLLLDEPLSALDLKLRTEMQYELRELQRRLGITFIFVTHDQEEALAMSDYIFVLNKGKIQQFGTPKDIYDEPINRFVADFIGESNILSGRMIDDFLVEFAGKQFACVDRGFAPNEPVDVVIRPEDLELAAPEDGQIVIRVDSLLFRGVHYEICGYDENGNEWLVHSTKKAEVGETVGLRFEPEAIHVMRVEREDEGA.

One can recognise an ABC transporter domain in the interval 7–237 (IRFERVTKEY…PINRFVADFI (231 aa)). 39 to 46 (GPSGCGKT) contacts ATP.

The protein belongs to the ABC transporter superfamily. Spermidine/putrescine importer (TC 3.A.1.11.1) family. As to quaternary structure, the complex is composed of two ATP-binding proteins (PotA), two transmembrane proteins (PotB and PotC) and a solute-binding protein (PotD).

It localises to the cell membrane. The enzyme catalyses ATP + H2O + polyamine-[polyamine-binding protein]Side 1 = ADP + phosphate + polyamineSide 2 + [polyamine-binding protein]Side 1.. Functionally, part of the ABC transporter complex PotABCD involved in spermidine/putrescine import. Responsible for energy coupling to the transport system. This Geobacillus kaustophilus (strain HTA426) protein is Spermidine/putrescine import ATP-binding protein PotA.